An 875-amino-acid chain; its full sequence is Alanine--tRNA ligase (875 aa).

4 residues coordinate Zn(2+): His564, His568, Cys666, and His670.

Belongs to the class-II aminoacyl-tRNA synthetase family. Homotetramer. Requires Zn(2+) as cofactor.

Its subcellular location is the cytoplasm. The catalysed reaction is tRNA(Ala) + L-alanine + ATP = L-alanyl-tRNA(Ala) + AMP + diphosphate. Its function is as follows. Catalyzes the attachment of alanine to tRNA(Ala) in a two-step reaction: alanine is first activated by ATP to form Ala-AMP and then transferred to the acceptor end of tRNA(Ala). Also edits incorrectly charged Ser-tRNA(Ala) and Gly-tRNA(Ala) via its editing domain. The protein is Alanine--tRNA ligase of Klebsiella pneumoniae subsp. pneumoniae (strain ATCC 700721 / MGH 78578).